The chain runs to 590 residues: Aspartate--tRNA(Asp/Asn) ligase (590 aa).

L-aspartate is bound at residue Glu-175. Residues 199–202 are aspartate; it reads QQYK. Residues Arg-221 and His-450 each contribute to the L-aspartate site. 221–223 contributes to the ATP binding site; sequence RDE. Glu-484 is an ATP binding site. An L-aspartate-binding site is contributed by Arg-491. 536–539 is a binding site for ATP; it reads GVDR.

Belongs to the class-II aminoacyl-tRNA synthetase family. Type 1 subfamily. In terms of assembly, homodimer.

The protein resides in the cytoplasm. The catalysed reaction is tRNA(Asx) + L-aspartate + ATP = L-aspartyl-tRNA(Asx) + AMP + diphosphate. In terms of biological role, aspartyl-tRNA synthetase with relaxed tRNA specificity since it is able to aspartylate not only its cognate tRNA(Asp) but also tRNA(Asn). Reaction proceeds in two steps: L-aspartate is first activated by ATP to form Asp-AMP and then transferred to the acceptor end of tRNA(Asp/Asn). This Bradyrhizobium diazoefficiens (strain JCM 10833 / BCRC 13528 / IAM 13628 / NBRC 14792 / USDA 110) protein is Aspartate--tRNA(Asp/Asn) ligase.